The primary structure comprises 317 residues: Methionyl-tRNA formyltransferase (317 aa).

A (6S)-5,6,7,8-tetrahydrofolate-binding site is contributed by serine 109 to proline 112.

The protein belongs to the Fmt family.

The enzyme catalyses L-methionyl-tRNA(fMet) + (6R)-10-formyltetrahydrofolate = N-formyl-L-methionyl-tRNA(fMet) + (6S)-5,6,7,8-tetrahydrofolate + H(+). In terms of biological role, attaches a formyl group to the free amino group of methionyl-tRNA(fMet). The formyl group appears to play a dual role in the initiator identity of N-formylmethionyl-tRNA by promoting its recognition by IF2 and preventing the misappropriation of this tRNA by the elongation apparatus. The protein is Methionyl-tRNA formyltransferase of Desulforamulus reducens (strain ATCC BAA-1160 / DSM 100696 / MI-1) (Desulfotomaculum reducens).